Reading from the N-terminus, the 494-residue chain is Cytochrome P450 2A4 (494 aa).

Residue Ser131 is modified to Phosphoserine. At Lys379 the chain carries N6-acetyllysine. Cys439 serves as a coordination point for heme.

This sequence belongs to the cytochrome P450 family. Heme serves as cofactor. In terms of tissue distribution, kidney and lung. Expressed in liver, with a strong circadian rhythmicity. Circadian expression is regulated by DBP.

The protein resides in the endoplasmic reticulum membrane. Its subcellular location is the microsome membrane. It catalyses the reaction an organic molecule + reduced [NADPH--hemoprotein reductase] + O2 = an alcohol + oxidized [NADPH--hemoprotein reductase] + H2O + H(+). In terms of biological role, highly active in the 15-alpha-hydroxylation of testosterone. Also active in the 15-alpha-hydroxylation of progesterone and androstenedione. Little or no activity on corticosterone, pregnenolone, dehydroepiandrosterone, estradiol or estriol. This Mus musculus (Mouse) protein is Cytochrome P450 2A4 (Cyp2a4).